A 541-amino-acid chain; its full sequence is MAAKDVKFGNDARVKMLRGVNVLADAVKVTLGPKGRNVVLDKSFGAPTITKDGVSVAREIELEDKFENMGAQMVKEVASKANDAAGDGTTTATVLAQSIITEGLKAVAAGMNPMDLKRGIDQAVIAAVEELKKLSVPCSDSKAIAQVGTISANSDETVGTLIAQAMEKVGKEGVITVEEGTGLQDELDVVEGMQFDRGYLSPYFINKPETGAVELETPFILLADKKISNIREMLPVLEAVAKAGKPLLIIAEDVEGEALATLVVNTMRGIVKVAAVKAPGFGDRRKAMLQDIAILTGGTVISEEIGMELEKAALEDLGQAKRVVINKDTTTIIDGVGEETTIQGRVTQIRQQIEEATSDYDKEKLQERVAKLAGGVAVLKVGAATEVEMKEKKARVEDALHATRAAVEEGVVAGGGVALVRVAAQLTELRGQNEDQNVGIKVALRAMESPLRQIVSNAGEEPSVVANNVKAGDGNYGYNAQTEEYGNMIDFGILDPTKVTRSALQYAASVAGLMITTECMVTDLPKGDAPDLGAGAGGMGG.

ATP contacts are provided by residues 30 to 33 (TLGP), Lys-51, 87 to 91 (DGTTT), Gly-415, and Asp-495.

The protein belongs to the chaperonin (HSP60) family. As to quaternary structure, forms a cylinder of 14 subunits composed of two heptameric rings stacked back-to-back. Interacts with the co-chaperonin GroES.

It is found in the cytoplasm. The enzyme catalyses ATP + H2O + a folded polypeptide = ADP + phosphate + an unfolded polypeptide.. Functionally, together with its co-chaperonin GroES, plays an essential role in assisting protein folding. The GroEL-GroES system forms a nano-cage that allows encapsulation of the non-native substrate proteins and provides a physical environment optimized to promote and accelerate protein folding. The chain is Chaperonin GroEL from Pantoea ananas (Erwinia uredovora).